Reading from the N-terminus, the 411-residue chain is S-adenosylmethionine synthase (411 aa).

Residue histidine 15 coordinates ATP. Aspartate 17 is a binding site for Mg(2+). Residue glutamate 43 coordinates K(+). The L-methionine site is built by glutamate 56 and glutamine 99. The tract at residues 99–109 is flexible loop; it reads QSQEIAQGVDT. ATP is bound by residues 179-181, aspartate 260, 266-267, alanine 283, and lysine 287; these read DGK and RK. Aspartate 260 contributes to the L-methionine binding site. Residue lysine 291 coordinates L-methionine.

The protein belongs to the AdoMet synthase family. As to quaternary structure, homotetramer; dimer of dimers. Mg(2+) is required as a cofactor. K(+) serves as cofactor.

The protein resides in the cytoplasm. The enzyme catalyses L-methionine + ATP + H2O = S-adenosyl-L-methionine + phosphate + diphosphate. It participates in amino-acid biosynthesis; S-adenosyl-L-methionine biosynthesis; S-adenosyl-L-methionine from L-methionine: step 1/1. Functionally, catalyzes the formation of S-adenosylmethionine (AdoMet) from methionine and ATP. The overall synthetic reaction is composed of two sequential steps, AdoMet formation and the subsequent tripolyphosphate hydrolysis which occurs prior to release of AdoMet from the enzyme. The polypeptide is S-adenosylmethionine synthase (Corynebacterium jeikeium (strain K411)).